The sequence spans 475 residues: Sulfate adenylyltransferase subunit 1 (475 aa).

A tr-type G domain is found at 25–239; sequence KSLLRFLTCG…EVLETVEIQR (215 aa). The tract at residues 34-41 is G1; the sequence is GSVDDGKS. GTP is bound at residue 34–41; that stretch reads GSVDDGKS. Positions 92–96 are G2; the sequence is GITID. Residues 113-116 form a G3 region; it reads DTPG. Residues 113-117 and 168-171 contribute to the GTP site; these read DTPGH and NKMD. Residues 168 to 171 are G4; that stretch reads NKMD. Residues 206-208 are G5; sequence SAL.

This sequence belongs to the TRAFAC class translation factor GTPase superfamily. Classic translation factor GTPase family. CysN/NodQ subfamily. Heterodimer composed of CysD, the smaller subunit, and CysN.

It carries out the reaction sulfate + ATP + H(+) = adenosine 5'-phosphosulfate + diphosphate. The protein operates within sulfur metabolism; hydrogen sulfide biosynthesis; sulfite from sulfate: step 1/3. In terms of biological role, with CysD forms the ATP sulfurylase (ATPS) that catalyzes the adenylation of sulfate producing adenosine 5'-phosphosulfate (APS) and diphosphate, the first enzymatic step in sulfur assimilation pathway. APS synthesis involves the formation of a high-energy phosphoric-sulfuric acid anhydride bond driven by GTP hydrolysis by CysN coupled to ATP hydrolysis by CysD. The sequence is that of Sulfate adenylyltransferase subunit 1 from Escherichia coli O157:H7.